A 284-amino-acid chain; its full sequence is NAD kinase (284 aa).

D67 functions as the Proton acceptor in the catalytic mechanism. Residues 67-68, 141-142, R152, K169, D171, 182-187, and Q241 contribute to the NAD(+) site; these read DG, ND, and TGYSLS.

The protein belongs to the NAD kinase family. A divalent metal cation serves as cofactor.

Its subcellular location is the cytoplasm. It carries out the reaction NAD(+) + ATP = ADP + NADP(+) + H(+). Involved in the regulation of the intracellular balance of NAD and NADP, and is a key enzyme in the biosynthesis of NADP. Catalyzes specifically the phosphorylation on 2'-hydroxyl of the adenosine moiety of NAD to yield NADP. The protein is NAD kinase of Geotalea daltonii (strain DSM 22248 / JCM 15807 / FRC-32) (Geobacter daltonii).